A 398-amino-acid chain; its full sequence is Glycosyltransferase GlyF (398 aa).

The segment at 1 to 259 is GT8 domain; sequence MRKSIVLAAD…SEIAFQRSDL (259 aa). UDP contacts are provided by residues 8 to 13 and 101 to 102; these read AADNAY and DS. Mn(2+) is bound by residues aspartate 101, aspartate 103, and histidine 221. 221-227 provides a ligand contact to UDP; sequence HYASHDK.

It in the N-terminal section; belongs to the glycosyltransferase 8 family.

May be involved in the polymorphic O-glycosylation of the serine-rich repeat protein PsrP. Has hydrolytic activity against UDP-galactose and to a lesser extent against UDP-glucose; no glycosyltransferase activity has been seen with tested substrates. The polypeptide is Glycosyltransferase GlyF (Streptococcus pneumoniae serotype 4 (strain ATCC BAA-334 / TIGR4)).